The chain runs to 59 residues: UPF0434 protein Rsph17025_2896 (59 aa).

Belongs to the UPF0434 family.

The protein is UPF0434 protein Rsph17025_2896 of Cereibacter sphaeroides (strain ATCC 17025 / ATH 2.4.3) (Rhodobacter sphaeroides).